A 51-amino-acid chain; its full sequence is Toxin CSTX-18 (51 aa).

4 cysteine pairs are disulfide-bonded: C9–C22, C14–C27, C21–C36, and C29–C34.

Contains 4 disulfide bonds. As to expression, expressed by the venom gland.

It localises to the secreted. The polypeptide is Toxin CSTX-18 (Cupiennius salei (American wandering spider)).